Reading from the N-terminus, the 547-residue chain is Probable aquaporin-5 (547 aa).

Residues 1 to 13 (MSSSILNNRSARS) are compositionally biased toward polar residues. Positions 1-208 (MSSSILNNRS…DPRIPPNDRR (208 aa)) are disordered. At 1–269 (MSSSILNNRS…QWMNSNFKNH (269 aa)) the chain is on the cytoplasmic side. A compositionally biased stretch (low complexity) spans 15–32 (PAGANPAFNPPAEASSSS). Composition is skewed to basic and acidic residues over residues 152–169 (EYERYYRNEGRNDRDRYT) and 198–208 (DDPRIPPNDRR). A helical membrane pass occupies residues 270 to 290 (FVAGVGEFIGTTMFLFFAFAG). Over 291 to 316 (TEVANIQADTTNRTTTGESTGSLNVS) the chain is Extracellular. Residues asparagine 302 and asparagine 314 are each glycosylated (N-linked (GlcNAc...) asparagine). A helical membrane pass occupies residues 317–337 (KLLYISIIFGFSLMVNVWVFF). The Cytoplasmic portion of the chain corresponds to 338-363 (RISGGLFNPAVTMAMLMVKAISVTRA). The NPA 1 signature appears at 345-347 (NPA). The helical transmembrane segment at 364-384 (IVLFLAQILGSMLASVVVRYL) threads the bilayer. At 385–400 (FPETFNVRTTLGGGAS) the chain is on the extracellular side. A helical membrane pass occupies residues 401-421 (LVQGVFIEALLTAELVFTIFM). Topologically, residues 422 to 428 (LAKEKHR) are cytoplasmic. The helical transmembrane segment at 429-449 (ATFIAPVGIGLALFIAEMVGV) threads the bilayer. Topologically, residues 450–475 (QFTGGSLNPARSFGPCVITGSFDTEH) are extracellular. The NPA 2 signature appears at 457-459 (NPA). The chain crosses the membrane as a helical span at residues 476 to 496 (WIYWVGPAIGSLIAVCFYWFI). Over 497 to 547 (KTLEYEMANPGADGDDLNDPTKNPEKRAEIQASKPVPTAAFGSGKTASILS) the chain is Cytoplasmic. Residues 510–547 (GDDLNDPTKNPEKRAEIQASKPVPTAAFGSGKTASILS) are disordered.

This sequence belongs to the MIP/aquaporin (TC 1.A.8) family.

Its subcellular location is the membrane. It catalyses the reaction H2O(in) = H2O(out). Functionally, probable water channel that may have redundant functions with FgAQP3. This chain is Probable aquaporin-5, found in Gibberella zeae (strain ATCC MYA-4620 / CBS 123657 / FGSC 9075 / NRRL 31084 / PH-1) (Wheat head blight fungus).